A 374-amino-acid chain; its full sequence is GDSL esterase/lipase 1 (374 aa).

Positions 1–25 (MENSQLVSITFLAYTIIISIGSINC) are cleaved as a signal peptide. N-linked (GlcNAc...) asparagine glycosylation is present at N34. Residue S44 is the Nucleophile of the active site. N-linked (GlcNAc...) asparagine glycans are attached at residues N184, N203, and N330. Catalysis depends on charge relay system residues D338 and H341. N360 carries N-linked (GlcNAc...) asparagine glycosylation.

This sequence belongs to the 'GDSL' lipolytic enzyme family.

The protein resides in the secreted. Confers resistance to the necrotrophic fungus Alternaria brassicicola. Possesses lipase and antimicrobial activities that directly disrupt fungal spore integrity. Triggers systemic resistance, mostly by the ethylene-dependent pathway. This is GDSL esterase/lipase 1 from Arabidopsis thaliana (Mouse-ear cress).